Reading from the N-terminus, the 2561-residue chain is Plipastatin synthase subunit A (2561 aa).

A domain 1 (glutamate-activating) region spans residues 1–1038 (MSEHTYSLTH…ATVIREGTDS (1038 aa)). The condensation 1 stretch occupies residues 2-300 (SEHTYSLTHA…SSLPIRITVD (299 aa)). Positions 485–888 (TYAELDMYAS…SIEGVREAAV (404 aa)) are adenylation 1. Residues 961–1036 (APRNVTEMKL…GLATVIREGT (76 aa)) enclose the Carrier 1 domain. At serine 996 the chain carries O-(pantetheine 4'-phosphoryl)serine. The tract at residues 1048–1338 (KQETYPVSSA…NTLALRTRPE (291 aa)) is condensation 2. The segment at 1048 to 2554 (KQETYPVSSA…ELTLSALSSI (1507 aa)) is domain 2 (D-ornithine-activating). Positions 1525-1932 (SYRLLNERAN…QTGLVREAAV (408 aa)) are adenylation 2. In terms of domain architecture, Carrier 2 spans 2007–2081 (APVNDLQKTM…ELCGHITPLA (75 aa)). At serine 2042 the chain carries O-(pantetheine 4'-phosphoryl)serine. The epimerization stretch occupies residues 2089–2554 (AEGEAELTPI…ELTLSALSSI (466 aa)).

Belongs to the ATP-dependent AMP-binding enzyme family. Pantetheine 4'-phosphate serves as cofactor.

Functionally, this protein is a multifunctional enzyme, able to activate and polymerize the amino acids Glu and Orn as part of the biosynthesis of the lipopeptide antibiotic lipastatin. The Orn residue is further epimerized to the D-isomer form. The activation sites for these amino acids consist of individual domains. This is Plipastatin synthase subunit A (ppsA) from Bacillus subtilis (strain 168).